Consider the following 176-residue polypeptide: RNA 2',3'-cyclic phosphodiesterase (176 aa).

The Proton donor role is filled by His-43. 2 consecutive short sequence motifs (HXTX) follow at residues 43-46 (HLTL) and 125-128 (HITL). Residue His-125 is the Proton acceptor of the active site.

Belongs to the 2H phosphoesterase superfamily. ThpR family. In terms of assembly, monomer.

The catalysed reaction is a 3'-end 2',3'-cyclophospho-ribonucleotide-RNA + H2O = a 3'-end 2'-phospho-ribonucleotide-RNA + H(+). In terms of biological role, hydrolyzes RNA 2',3'-cyclic phosphodiester to an RNA 2'-phosphomonoester. In vitro, can also ligate 5' and 3' half-tRNA molecules with 2',3'-cyclic phosphate and 5'-hydroxyl termini, respectively, to the product containing the 2'-5' phosphodiester linkage. This reaction does not require ATP and is reversible. In Escherichia coli (strain K12), this protein is RNA 2',3'-cyclic phosphodiesterase.